The sequence spans 93 residues: UPF0058 protein AF_0738 (93 aa).

The protein belongs to the UPF0058 family.

This is UPF0058 protein AF_0738 from Archaeoglobus fulgidus (strain ATCC 49558 / DSM 4304 / JCM 9628 / NBRC 100126 / VC-16).